The following is a 155-amino-acid chain: Cyclic pyranopterin monophosphate synthase (155 aa).

Residues 75-77 and 111-112 contribute to the substrate site; these read LCH and ME. Asp-126 is an active-site residue.

This sequence belongs to the MoaC family. Homohexamer; trimer of dimers.

It catalyses the reaction (8S)-3',8-cyclo-7,8-dihydroguanosine 5'-triphosphate = cyclic pyranopterin phosphate + diphosphate. Its pathway is cofactor biosynthesis; molybdopterin biosynthesis. Functionally, catalyzes the conversion of (8S)-3',8-cyclo-7,8-dihydroguanosine 5'-triphosphate to cyclic pyranopterin monophosphate (cPMP). This chain is Cyclic pyranopterin monophosphate synthase, found in Corynebacterium efficiens (strain DSM 44549 / YS-314 / AJ 12310 / JCM 11189 / NBRC 100395).